A 341-amino-acid polypeptide reads, in one-letter code: Heat-inducible transcription repressor HrcA (341 aa).

This sequence belongs to the HrcA family.

In terms of biological role, negative regulator of class I heat shock genes (grpE-dnaK-dnaJ and groELS operons). Prevents heat-shock induction of these operons. The polypeptide is Heat-inducible transcription repressor HrcA (Carboxydothermus hydrogenoformans (strain ATCC BAA-161 / DSM 6008 / Z-2901)).